We begin with the raw amino-acid sequence, 853 residues long: Transcription factor CPH2 (853 aa).

Disordered regions lie at residues 165-209 and 296-353; these read EPPI…DKNS and NMNP…VHHP. Residues 180–194 are compositionally biased toward low complexity; sequence TTTVSSTNSITNTTK. A bHLH domain is found at 205-274; the sequence is KDKNSHNMIE…TKATEYIKHL (70 aa). The segment covering 301 to 315 has biased composition (pro residues); that stretch reads SLPPPPQQMQAPPQP. Residues 330 to 352 are compositionally biased toward low complexity; it reads TPASQYPSPQQQVSPTQQQTVHH.

The protein localises to the nucleus. Functionally, transcription factor that positively controls filamentous growth, virulence, and invasiveness. Binds directly to the two SRE-1-like elements upstream of TEC1 and thus positively regulates expression of this important hyphal growth regulator. Functions independently of known signaling cascades involving EFG1. Also regulates gene expression during intestinal colonization but is not involved in host cell adhesion. This is Transcription factor CPH2 (CPH2) from Candida albicans (strain SC5314 / ATCC MYA-2876) (Yeast).